A 573-amino-acid polypeptide reads, in one-letter code: 3-oxosteroid 1-dehydrogenase (573 aa).

7 to 36 (DLIVVGSGAGACWAPIRAQEQGLKTLVVEK) is an FAD binding site.

This sequence belongs to the FAD-dependent oxidoreductase 2 family. 3-oxosteroid dehydrogenase subfamily. FAD serves as cofactor.

The protein resides in the cell inner membrane. It carries out the reaction a 3-oxosteroid + A = a 3-oxo-Delta(1)-steroid + AH2. The protein operates within lipid metabolism; steroid degradation. In terms of biological role, dehydrogenates steroids by introducing a double bond in steroid ring A. The sequence is that of 3-oxosteroid 1-dehydrogenase from Comamonas testosteroni (Pseudomonas testosteroni).